Here is a 336-residue protein sequence, read N- to C-terminus: uncharacterized protein (336 aa).

NADP(+) contacts are provided by Lys-39 and Tyr-166.

The protein belongs to the NAD(P)-dependent epimerase/dehydratase family. Dihydroflavonol-4-reductase subfamily.

The protein resides in the cytoplasm. It is found in the nucleus. This is an uncharacterized protein from Schizosaccharomyces pombe (strain 972 / ATCC 24843) (Fission yeast).